Consider the following 496-residue polypeptide: UDP-glycosyltransferase 73C3 (496 aa).

UDP-alpha-D-glucose-binding positions include Ser-297, 357–359 (APQ), 374–382 (HCGWNSTLE), and 396–399 (FGDQ).

This sequence belongs to the UDP-glycosyltransferase family.

The chain is UDP-glycosyltransferase 73C3 (UGT73C3) from Arabidopsis thaliana (Mouse-ear cress).